The following is a 324-amino-acid chain: Interactor of constitutive active ROPs 4 (324 aa).

4 disordered regions span residues 1 to 74 (MPKP…SGLE), 91 to 156 (LAKA…ASKE), 175 to 201 (SLSE…KAKE), and 289 to 324 (FVGS…KGQK). Low complexity predominate over residues 13-28 (QRQSPRLRTSLLSTSS). 3 stretches are compositionally biased toward basic and acidic residues: residues 29-50 (DPHH…DRRS), 95-106 (EAAKKRAQEELH), and 118-156 (PERD…ASKE). A coiled-coil region spans residues 62–266 (SQKKLGSRIS…ADAAAAVLSG (205 aa)). Over residues 313-324 (MFGDLWKKKGQK) the composition is skewed to basic and acidic residues.

Belongs to the ICR family. In terms of assembly, interacts with ARAC11 in vitro.

Its function is as follows. Acts as a scaffold, mediating interaction of ROPs with different proteins. The sequence is that of Interactor of constitutive active ROPs 4 (ICR4) from Arabidopsis thaliana (Mouse-ear cress).